The sequence spans 101 residues: Venom peptide Pc (101 aa).

Positions 1–20 are cleaved as a signal peptide; that stretch reads MSHLRIAVIFLCTLFALTAG.

Belongs to the scorpion La1-like peptide family. Contains 4 disulfide bonds. As to expression, expressed by the venom gland.

It is found in the secreted. The protein is Venom peptide Pc of Pandinus cavimanus (Tanzanian red clawed scorpion).